The sequence spans 447 residues: MLKKQSAGLVLWGAILFVAWNALLLLFFWTRPVPSRLPSDNALDDDPASLTREVIRLAQDAEVELERQRGLLQQIREHHALWSQRWKVPTAAPPAQPHVPVTPPPAVIPILVIACDRSTVRRCLDKLLHYRPSAELFPIIVSQDCGHEETAQVIASYGSAVTHIRQPDLSNIAVQPDHRKFQGYYKIARHYRWALGQIFHNFNYPAAVVVEDDLEVAPDFFEYFQATYPLLKADPSLWCVSAWNDNGKEQMVDSSKPELLYRTDFFPGLGWLLLAELWAELEPKWPKAFWDDWMRRPEQRKGRACVRPEISRTMTFGRKGVSHGQFFDQHLKFIKLNQQFVPFTQLDLSYLQQEAYDRDFLARVYGAPQLQVEKVRTNDRKELGEVRVQYTGRDSFKAFAKALGVMDDLKSGVPRAGYRGIVTFLFRGRRVHLAPPQTWDGYDPSWT.

The Cytoplasmic segment spans residues M1–S6. Residues A7–W29 form a helical; Signal-anchor for type II membrane protein membrane-spanning segment. At T30 to T447 the chain is on the lumenal side. A disulfide bridge connects residues C115 and C145. Substrate-binding residues include R117, D144, H190, and D212. D213 contacts Mn(2+). C239 and C305 form a disulfide bridge. Catalysis depends on D291, which acts as the Proton acceptor. S322 contacts substrate.

Belongs to the glycosyltransferase 13 family. In terms of assembly, interacts with MGAT4D. Interacts with BRI3. The cofactor is Mn(2+).

The protein resides in the golgi apparatus membrane. Its subcellular location is the cytoplasm. It localises to the perinuclear region. It carries out the reaction N(4)-(alpha-D-Man-(1-&gt;3)-[alpha-D-Man-(1-&gt;3)-[alpha-D-Man-(1-&gt;6)]-alpha-D-Man-(1-&gt;6)]-beta-D-Man-(1-&gt;4)-beta-D-GlcNAc-(1-&gt;4)-beta-D-GlcNAc)-L-asparaginyl-[protein] (N-glucan mannose isomer 5A1,2) + UDP-N-acetyl-alpha-D-glucosamine = N(4)-{beta-D-GlcNAc-(1-&gt;2)-alpha-D-Man-(1-&gt;3)-[alpha-D-Man-(1-&gt;3)-[alpha-D-Man-(1-&gt;6)]-alpha-D-Man-(1-&gt;6)]-beta-D-Man-(1-&gt;4)-beta-D-GlcNAc-(1-&gt;4)-beta-D-GlcNAc}-L-asparaginyl-[protein] + UDP + H(+). Its pathway is protein modification; protein glycosylation. Functionally, initiates complex N-linked carbohydrate formation. Essential for the conversion of high-mannose to hybrid and complex N-glycans. In Oryctolagus cuniculus (Rabbit), this protein is Alpha-1,3-mannosyl-glycoprotein 2-beta-N-acetylglucosaminyltransferase (MGAT1).